The sequence spans 311 residues: UDP-N-acetylenolpyruvoylglucosamine reductase (311 aa).

One can recognise an FAD-binding PCMH-type domain in the interval 29-191; it reads IGGKADIVLK…LSARLKLKPI (163 aa). Residue R172 is part of the active site. The active-site Proton donor is the S223. The active site involves E299.

It belongs to the MurB family. The cofactor is FAD.

It localises to the cytoplasm. It catalyses the reaction UDP-N-acetyl-alpha-D-muramate + NADP(+) = UDP-N-acetyl-3-O-(1-carboxyvinyl)-alpha-D-glucosamine + NADPH + H(+). It functions in the pathway cell wall biogenesis; peptidoglycan biosynthesis. Cell wall formation. This chain is UDP-N-acetylenolpyruvoylglucosamine reductase, found in Chloroherpeton thalassium (strain ATCC 35110 / GB-78).